Here is an 800-residue protein sequence, read N- to C-terminus: DNA topoisomerase 4 subunit A (800 aa).

A Topo IIA-type catalytic domain is found at 31–495; sequence LPDVRDGLKP…EIEEIKIDKE (465 aa). The active-site O-(5'-phospho-DNA)-tyrosine intermediate is Tyr119.

It belongs to the type II topoisomerase GyrA/ParC subunit family. ParC type 2 subfamily. In terms of assembly, heterotetramer composed of ParC and ParE.

It is found in the cell membrane. It catalyses the reaction ATP-dependent breakage, passage and rejoining of double-stranded DNA.. In terms of biological role, topoisomerase IV is essential for chromosome segregation. It relaxes supercoiled DNA. Performs the decatenation events required during the replication of a circular DNA molecule. The polypeptide is DNA topoisomerase 4 subunit A (Staphylococcus aureus (strain N315)).